The sequence spans 260 residues: Ribosomal RNA small subunit methyltransferase J (260 aa).

Residues 125–126 (ER) and aspartate 179 each bind S-adenosyl-L-methionine.

It belongs to the methyltransferase superfamily. RsmJ family.

The protein localises to the cytoplasm. It carries out the reaction guanosine(1516) in 16S rRNA + S-adenosyl-L-methionine = N(2)-methylguanosine(1516) in 16S rRNA + S-adenosyl-L-homocysteine + H(+). Specifically methylates the guanosine in position 1516 of 16S rRNA. The polypeptide is Ribosomal RNA small subunit methyltransferase J (Pseudomonas entomophila (strain L48)).